We begin with the raw amino-acid sequence, 92 residues long: Progonadoliberin-1 (92 aa).

Residues 1 to 23 (METIPKLMAAVVLLTVCLEGCSS) form the signal peptide. The residue at position 24 (Gln-24) is a Pyrrolidone carboxylic acid. Gly-33 is modified (glycine amide).

It belongs to the GnRH family. Post-translationally, the precursor is cleaved by ACE, which removes the Gly-Lys-Arg peptide at the C-terminus, leading to mature hormone. The mature form of Gonadoliberin-1 is also cleaved and degraded by ACE. Central nervous system.

The protein localises to the secreted. In terms of biological role, stimulates the secretion of gonadotropins; it stimulates the secretion of both luteinizing and follicle-stimulating hormones. The sequence is that of Progonadoliberin-1 (Gnrh1) from Rattus norvegicus (Rat).